The following is a 72-amino-acid chain: Translation initiation factor IF-1 (72 aa).

The region spanning 1-72 (MAREDLIEVE…SRGRITYRKK (72 aa)) is the S1-like domain.

It belongs to the IF-1 family. In terms of assembly, component of the 30S ribosomal translation pre-initiation complex which assembles on the 30S ribosome in the order IF-2 and IF-3, IF-1 and N-formylmethionyl-tRNA(fMet); mRNA recruitment can occur at any time during PIC assembly.

It localises to the cytoplasm. Functionally, one of the essential components for the initiation of protein synthesis. Stabilizes the binding of IF-2 and IF-3 on the 30S subunit to which N-formylmethionyl-tRNA(fMet) subsequently binds. Helps modulate mRNA selection, yielding the 30S pre-initiation complex (PIC). Upon addition of the 50S ribosomal subunit IF-1, IF-2 and IF-3 are released leaving the mature 70S translation initiation complex. This chain is Translation initiation factor IF-1, found in Acholeplasma laidlawii (strain PG-8A).